Consider the following 475-residue polypeptide: Ribulose bisphosphate carboxylase large chain (475 aa).

Residues 1–2 (MA) constitute a propeptide that is removed on maturation. Pro3 carries the N-acetylproline modification. Lys14 is subject to N6,N6,N6-trimethyllysine. Residues Asn123 and Thr173 each coordinate substrate. Lys175 acts as the Proton acceptor in catalysis. Lys177 serves as a coordination point for substrate. Mg(2+)-binding residues include Lys201, Asp203, and Glu204. Lys201 carries the N6-carboxylysine modification. His294 functions as the Proton acceptor in the catalytic mechanism. Substrate is bound by residues Arg295, His327, and Ser379.

The protein belongs to the RuBisCO large chain family. Type I subfamily. Heterohexadecamer of 8 large chains and 8 small chains; disulfide-linked. The disulfide link is formed within the large subunit homodimers. The cofactor is Mg(2+). In terms of processing, the disulfide bond which can form in the large chain dimeric partners within the hexadecamer appears to be associated with oxidative stress and protein turnover.

It is found in the plastid. Its subcellular location is the chloroplast. The catalysed reaction is 2 (2R)-3-phosphoglycerate + 2 H(+) = D-ribulose 1,5-bisphosphate + CO2 + H2O. It catalyses the reaction D-ribulose 1,5-bisphosphate + O2 = 2-phosphoglycolate + (2R)-3-phosphoglycerate + 2 H(+). In terms of biological role, ruBisCO catalyzes two reactions: the carboxylation of D-ribulose 1,5-bisphosphate, the primary event in carbon dioxide fixation, as well as the oxidative fragmentation of the pentose substrate in the photorespiration process. Both reactions occur simultaneously and in competition at the same active site. This is Ribulose bisphosphate carboxylase large chain from Oedogonium cardiacum (Filamentous green alga).